Consider the following 236-residue polypeptide: Large ribosomal subunit protein uL3 (236 aa).

A disordered region spans residues 139-163 (ARDSSTTHEHHRHVGAIGQRKTPGK).

This sequence belongs to the universal ribosomal protein uL3 family. As to quaternary structure, part of the 50S ribosomal subunit. Forms a cluster with proteins L14 and L19.

Its function is as follows. One of the primary rRNA binding proteins, it binds directly near the 3'-end of the 23S rRNA, where it nucleates assembly of the 50S subunit. The sequence is that of Large ribosomal subunit protein uL3 from Anaeromyxobacter sp. (strain Fw109-5).